Reading from the N-terminus, the 215-residue chain is MRIGILGGTFDPIHYGHIRPAIEVKEALGLDKVLLMPNHIPPHKHQPNLSTAQRLKMVADVCAELAGFELCDIEANRDTPSYTVVTLEQLSTQYPNAELFFIMGMDSFIHLQSWHKWQQIFGFANLVLCQRPGWHLSNEHPMQQVLMARSAAIDTLKNPPQKHHPIHGRIFTVDITPQDISSTQIRSALAIGKIPTDALMPVTLNYIQKQQLYLS.

Belongs to the NadD family.

The catalysed reaction is nicotinate beta-D-ribonucleotide + ATP + H(+) = deamido-NAD(+) + diphosphate. Its pathway is cofactor biosynthesis; NAD(+) biosynthesis; deamido-NAD(+) from nicotinate D-ribonucleotide: step 1/1. In terms of biological role, catalyzes the reversible adenylation of nicotinate mononucleotide (NaMN) to nicotinic acid adenine dinucleotide (NaAD). In Shewanella putrefaciens (strain CN-32 / ATCC BAA-453), this protein is Probable nicotinate-nucleotide adenylyltransferase.